The chain runs to 821 residues: Tip elongation aberrant protein Tea4 (821 aa).

2 stretches are compositionally biased toward polar residues: residues 1-11 (MLHMNSASSAD) and 21-31 (DPTQQNDSTII). The interval 1-36 (MLHMNSASSADSMEIMESHFDPTQQNDSTIIESRYS) is disordered. A Phosphotyrosine modification is found at Tyr-35. Phosphoserine is present on Ser-36. Tyr-40 bears the Phosphotyrosine mark. The disordered stretch occupies residues 51–79 (ISGENSEPQTVASQEISDSQEEDTTLTSS). The span at 53–67 (GENSEPQTVASQEIS) shows a compositional bias: polar residues. Residues 130 to 191 (IDCNFVHAIR…PAEYIETPSE (62 aa)) form the SH3 domain. Disordered stretches follow at residues 267–292 (LEIEFSDSSDSSLSAEYRSESEDHVT), 333–352 (SSTTADSKNSHSPYSKFSSA), 473–500 (DSFDTSNVTQDAPNDVEKEPISGQMPNN), 529–570 (SPRL…SSLL), and 664–697 (DASSAIPSSSISHDEDLLPRKNTEESTSSSSFSS). Residues 268 to 282 (EIEFSDSSDSSLSAE) show a composition bias toward low complexity. A compositionally biased stretch (basic and acidic residues) spans 283 to 292 (YRSESEDHVT). Composition is skewed to polar residues over residues 333-350 (SSTTADSKNSHSPYSKFS) and 473-484 (DSFDTSNVTQDA). The tract at residues 527–821 (LLSPRLYSSS…EMASLLNTNR (295 aa)) is interaction with tea1. The segment covering 529–541 (SPRLYSSSTPSSP) has biased composition (low complexity). Positions 554 to 563 (ENRKQADKVE) are enriched in basic and acidic residues. The interaction with win1 stretch occupies residues 599 to 821 (KAFSQSSIDL…EMASLLNTNR (223 aa)). The segment covering 665 to 674 (ASSAIPSSSI) has biased composition (low complexity). Basic and acidic residues predominate over residues 675-687 (SHDEDLLPRKNTE).

An essential component of the tea1 cell-end complex. Interacts with win1, tea1 and for3. Interacts with tip1 in the presence of tea1.

It localises to the cytoplasm. The protein localises to the cytoskeleton. In terms of biological role, cell polarity factor essential for the bipolar localization and function of structures containing the cell-end marker tea1 during the normal cell cycle. Regulates cell polarity in complex with tea1 and together with the stress signaling MAPK cascade, contributes to cell polarity maintenance under stress conditions. Required for the localization of for3 at the cell tip specifically during initiation of bipolar growth. During the new end take off (NETO), formation of a protein complex that includes tea1, tea4 and for3 is necessary and sufficient for the establishment of cell polarity and localized actin assembly at new cell ends. This chain is Tip elongation aberrant protein Tea4, found in Schizosaccharomyces pombe (strain 972 / ATCC 24843) (Fission yeast).